Reading from the N-terminus, the 365-residue chain is Mitogen-activated protein kinase HOG1 (365 aa).

In terms of domain architecture, Protein kinase spans 20–306 (YSDLQPVGMG…ATNALAHEYL (287 aa)). ATP is bound by residues 26–34 (VGMGAFGLV) and K49. D148 serves as the catalytic Proton acceptor. The TXY signature appears at 178-180 (TGY).

The protein belongs to the protein kinase superfamily. Ser/Thr protein kinase family. MAP kinase subfamily. HOG1 sub-subfamily. Mg(2+) is required as a cofactor.

It localises to the cytoplasm. It is found in the nucleus. It catalyses the reaction L-seryl-[protein] + ATP = O-phospho-L-seryl-[protein] + ADP + H(+). The enzyme catalyses L-threonyl-[protein] + ATP = O-phospho-L-threonyl-[protein] + ADP + H(+). Functionally, proline-directed serine/threonine-protein kinase involved in a signal transduction pathway that is activated by changes in the osmolarity of the extracellular environment. Controls osmotic regulation of transcription of target genes. Involved in environmental stress response, hyphal growth, conidiation and possibly secondary metabolism such as ustiloxin biosynthesis or the biosynthesis of other phytotoxic compounds that are inhibitory to rice shoot growth during seed germination. Plays a key role in responses to cell wall and membrane stresses but not oxidative stress. The protein is Mitogen-activated protein kinase HOG1 of Ustilaginoidea virens (Rice false smut fungus).